Consider the following 291-residue polypeptide: Probable 2-(5''-triphosphoribosyl)-3'-dephosphocoenzyme-A synthase (291 aa).

Belongs to the CitG/MdcB family.

It catalyses the reaction 3'-dephospho-CoA + ATP = 2'-(5''-triphospho-alpha-D-ribosyl)-3'-dephospho-CoA + adenine. Functionally, involved in the formation of 2-(5''-phosphoribosyl)-3'-dephosphocoenzyme-A, the prosthetic group of the acyl-carrier protein of the malonate decarboxylase. This Pseudomonas syringae pv. syringae (strain B728a) protein is Probable 2-(5''-triphosphoribosyl)-3'-dephosphocoenzyme-A synthase.